Consider the following 360-residue polypeptide: Peptide chain release factor 1 (360 aa).

Position 237 is an N5-methylglutamine (Gln237).

The protein belongs to the prokaryotic/mitochondrial release factor family. Post-translationally, methylated by PrmC. Methylation increases the termination efficiency of RF1.

It is found in the cytoplasm. Peptide chain release factor 1 directs the termination of translation in response to the peptide chain termination codons UAG and UAA. The polypeptide is Peptide chain release factor 1 (Pseudomonas putida (strain GB-1)).